Consider the following 157-residue polypeptide: ABA-responsive protein ABR17 (157 aa).

This sequence belongs to the BetVI family.

The sequence is that of ABA-responsive protein ABR17 from Pisum sativum (Garden pea).